Reading from the N-terminus, the 374-residue chain is uncharacterized protein (374 aa).

Belongs to the mimivirus R640 family.

Its subcellular location is the virion. This is an uncharacterized protein from Acanthamoeba polyphaga (Amoeba).